The sequence spans 218 residues: Protein-methionine-sulfoxide reductase heme-binding subunit MsrQ (218 aa).

5 consecutive transmembrane segments (helical) span residues 8 to 28 (VIVA…LLGW), 60 to 80 (FLLI…AVLI), 86 to 106 (LGLY…TLDL), 121 to 141 (PYIT…ITST), and 155 to 175 (VHML…WLVK).

This sequence belongs to the MsrQ family. Heterodimer of a catalytic subunit (MsrP) and a heme-binding subunit (MsrQ). FMN serves as cofactor. Requires heme b as cofactor.

Its subcellular location is the cell inner membrane. Functionally, part of the MsrPQ system that repairs oxidized periplasmic proteins containing methionine sulfoxide residues (Met-O), using respiratory chain electrons. Thus protects these proteins from oxidative-stress damage caused by reactive species of oxygen and chlorine generated by the host defense mechanisms. MsrPQ is essential for the maintenance of envelope integrity under bleach stress, rescuing a wide series of structurally unrelated periplasmic proteins from methionine oxidation. MsrQ provides electrons for reduction to the reductase catalytic subunit MsrP, using the quinone pool of the respiratory chain. In Xanthomonas oryzae pv. oryzae (strain MAFF 311018), this protein is Protein-methionine-sulfoxide reductase heme-binding subunit MsrQ.